We begin with the raw amino-acid sequence, 96 residues long: uncharacterized protein (96 aa).

Residues 35 to 96 (SPSGEKRSTK…KKFSSPPHPK (62 aa)) form a disordered region. A compositionally biased stretch (basic and acidic residues) spans 38 to 52 (GEKRSTKNQTKENTK). Residues 69-80 (ANQQTNENSKPL) are compositionally biased toward polar residues.

This is an uncharacterized protein from Dictyostelium discoideum (Social amoeba).